Here is a 327-residue protein sequence, read N- to C-terminus: tRNA pseudouridine synthase B (327 aa).

D69 acts as the Nucleophile in catalysis. Positions 97, 201, and 222 each coordinate substrate.

Belongs to the pseudouridine synthase TruB family. Type 1 subfamily.

The enzyme catalyses uridine(55) in tRNA = pseudouridine(55) in tRNA. Functionally, responsible for synthesis of pseudouridine from uracil-55 in the psi GC loop of transfer RNAs. The sequence is that of tRNA pseudouridine synthase B from Wigglesworthia glossinidia brevipalpis.